A 115-amino-acid polypeptide reads, in one-letter code: NADH-ubiquinone oxidoreductase chain 3 (115 aa).

Helical transmembrane passes span 3–23 (LIMV…VAFW), 55–75 (FFLV…LLPI), and 84–104 (INTM…GLAY).

The protein belongs to the complex I subunit 3 family. Core subunit of respiratory chain NADH dehydrogenase (Complex I) which is composed of 45 different subunits. Interacts with TMEM186. Interacts with TMEM242.

It localises to the mitochondrion inner membrane. The catalysed reaction is a ubiquinone + NADH + 5 H(+)(in) = a ubiquinol + NAD(+) + 4 H(+)(out). Core subunit of the mitochondrial membrane respiratory chain NADH dehydrogenase (Complex I) which catalyzes electron transfer from NADH through the respiratory chain, using ubiquinone as an electron acceptor. Essential for the catalytic activity of complex I. In Scotinomys teguina (Alston's brown mouse), this protein is NADH-ubiquinone oxidoreductase chain 3.